We begin with the raw amino-acid sequence, 127 residues long: Arginine decarboxylase proenzyme (127 aa).

Residue Ser72 is the Schiff-base intermediate with substrate; via pyruvic acid of the active site. Position 72 is a pyruvic acid (Ser); by autocatalysis (Ser72). The Proton acceptor; for processing activity role is filled by His77. Cys92 serves as the catalytic Proton donor; for catalytic activity.

It belongs to the prokaryotic AdoMetDC family. Type 1 subfamily. In terms of assembly, heterooctamer of four alpha and four beta chains arranged as a tetramer of alpha/beta heterodimers. Pyruvate is required as a cofactor. In terms of processing, is synthesized initially as an inactive proenzyme. Formation of the active enzyme involves a self-maturation process in which the active site pyruvoyl group is generated from an internal serine residue via an autocatalytic post-translational modification. Two non-identical subunits are generated from the proenzyme in this reaction, and the pyruvate is formed at the N-terminus of the alpha chain, which is derived from the carboxyl end of the proenzyme. The post-translation cleavage follows an unusual pathway, termed non-hydrolytic serinolysis, in which the side chain hydroxyl group of the serine supplies its oxygen atom to form the C-terminus of the beta chain, while the remainder of the serine residue undergoes an oxidative deamination to produce ammonia and the pyruvoyl group blocking the N-terminus of the alpha chain.

The catalysed reaction is L-arginine + H(+) = agmatine + CO2. It functions in the pathway amine and polyamine biosynthesis; agmatine biosynthesis; agmatine from L-arginine: step 1/1. Its function is as follows. Specifically catalyzes the decarboxylation of L-arginine to agmatine. Has no S-adenosylmethionine decarboxylase (AdoMetDC) activity. This is Arginine decarboxylase proenzyme from Staphylothermus marinus (strain ATCC 43588 / DSM 3639 / JCM 9404 / F1).